The sequence spans 624 residues: DNA mismatch repair protein MutL (624 aa).

The tract at residues 355–377 (EESAPERKLPEKTPEPSYSPMKL) is disordered. A compositionally biased stretch (basic and acidic residues) spans 358–368 (APERKLPEKTP).

Belongs to the DNA mismatch repair MutL/HexB family.

In terms of biological role, this protein is involved in the repair of mismatches in DNA. It is required for dam-dependent methyl-directed DNA mismatch repair. May act as a 'molecular matchmaker', a protein that promotes the formation of a stable complex between two or more DNA-binding proteins in an ATP-dependent manner without itself being part of a final effector complex. This is DNA mismatch repair protein MutL from Bacillus velezensis (strain DSM 23117 / BGSC 10A6 / LMG 26770 / FZB42) (Bacillus amyloliquefaciens subsp. plantarum).